Here is a 340-residue protein sequence, read N- to C-terminus: Phosphoribosylformylglycinamidine cyclo-ligase (340 aa).

It belongs to the AIR synthase family.

Its subcellular location is the cytoplasm. The enzyme catalyses 2-formamido-N(1)-(5-O-phospho-beta-D-ribosyl)acetamidine + ATP = 5-amino-1-(5-phospho-beta-D-ribosyl)imidazole + ADP + phosphate + H(+). Its pathway is purine metabolism; IMP biosynthesis via de novo pathway; 5-amino-1-(5-phospho-D-ribosyl)imidazole from N(2)-formyl-N(1)-(5-phospho-D-ribosyl)glycinamide: step 2/2. The polypeptide is Phosphoribosylformylglycinamidine cyclo-ligase (Streptococcus pyogenes serotype M2 (strain MGAS10270)).